Consider the following 837-residue polypeptide: Phenylalanine--tRNA ligase beta subunit (837 aa).

The region spanning 39-149 is the tRNA-binding domain; it reads SASLEGIVTG…EMNIAIPKIG (111 aa). Residues 415–520 form the B5 domain; the sequence is IEEQLLLLRR…RLIGYDRFDS (106 aa). Mg(2+) contacts are provided by D498, D504, E507, and E508. The FDX-ACB domain occupies 743-836; it reads PTVPSMERDI…LKVEFSAELR (94 aa).

The protein belongs to the phenylalanyl-tRNA synthetase beta subunit family. Type 1 subfamily. In terms of assembly, tetramer of two alpha and two beta subunits. Mg(2+) serves as cofactor.

It is found in the cytoplasm. The catalysed reaction is tRNA(Phe) + L-phenylalanine + ATP = L-phenylalanyl-tRNA(Phe) + AMP + diphosphate + H(+). This Prochlorococcus marinus (strain SARG / CCMP1375 / SS120) protein is Phenylalanine--tRNA ligase beta subunit.